Consider the following 290-residue polypeptide: Transmembrane protein 33 homolog (290 aa).

Disordered regions lie at residues 1–22 (MSSP…EFTG) and 39–72 (IDPN…SPRA). Residues 45-72 (SSNNTTTQRPSTSSSSRTSSSSTSSPRA) are compositionally biased toward low complexity. 4 helical membrane-spanning segments follow: residues 83 to 103 (LYGA…FYFI), 109 to 129 (FFYK…FNTF), 150 to 170 (FVFY…YLLP), and 218 to 238 (IVLI…LVFI).

This sequence belongs to the PER33/POM33 family.

It is found in the membrane. The protein is Transmembrane protein 33 homolog (tmem33) of Dictyostelium discoideum (Social amoeba).